Reading from the N-terminus, the 692-residue chain is Elongation factor G (692 aa).

Positions 8-283 (EDYRNFGIMA…AVVDYLPSPV (276 aa)) constitute a tr-type G domain. GTP-binding positions include 17 to 24 (AHIDAGKT), 81 to 85 (DTPGH), and 135 to 138 (NKMD).

The protein belongs to the TRAFAC class translation factor GTPase superfamily. Classic translation factor GTPase family. EF-G/EF-2 subfamily.

The protein resides in the cytoplasm. Its function is as follows. Catalyzes the GTP-dependent ribosomal translocation step during translation elongation. During this step, the ribosome changes from the pre-translocational (PRE) to the post-translocational (POST) state as the newly formed A-site-bound peptidyl-tRNA and P-site-bound deacylated tRNA move to the P and E sites, respectively. Catalyzes the coordinated movement of the two tRNA molecules, the mRNA and conformational changes in the ribosome. This chain is Elongation factor G, found in Caulobacter vibrioides (strain ATCC 19089 / CIP 103742 / CB 15) (Caulobacter crescentus).